Reading from the N-terminus, the 298-residue chain is uncharacterized protein (298 aa).

The region spanning 5–62 (TSLSAMRIFEAAARLGSFRAAAEELNLSPSAVSHAIMRLERDLGVALFERTTRSVSLT) is the HTH lysR-type domain. The H-T-H motif DNA-binding region spans 22–42 (FRAAAEELNLSPSAVSHAIMR).

It belongs to the LysR transcriptional regulatory family.

This is an uncharacterized protein from Sinorhizobium fredii (strain NBRC 101917 / NGR234).